Consider the following 410-residue polypeptide: Putative competence-damage inducible protein (410 aa).

It belongs to the CinA family.

In Clostridium beijerinckii (strain ATCC 51743 / NCIMB 8052) (Clostridium acetobutylicum), this protein is Putative competence-damage inducible protein.